The sequence spans 304 residues: MSWIERIKSNITPTRKASIPEGVWTKCDSCGQVLYRAELERNLEVCPKCDHHMRMTARNRLHSLLDEGSLVELGSELEPKDVLKFRDSKKYKDRLASAQKETDEKDALVVMKGTLYGMPVVAAAFEFAFMGGSMGSVVGARFVRAVEQALEDNCPLICFSASGGARMQEALMSLMQMAKTSAALAKMQERGLPYISVLTDPTMGGVSASFAMLGDLNIAEPKALIGFAGPRVIEQTVREKLPPGFQRSEFLIEKGAIDMIVRRPEMRLKLASILAKLMNLPAPNPEAPREGVVVPPVPDQEPEA.

The region spanning 23–292 (VWTKCDSCGQ…PNPEAPREGV (270 aa)) is the CoA carboxyltransferase N-terminal domain. Residues C27, C30, C46, and C49 each coordinate Zn(2+). The segment at 27–49 (CDSCGQVLYRAELERNLEVCPKC) adopts a C4-type zinc-finger fold. Positions 285–304 (PEAPREGVVVPPVPDQEPEA) are disordered. The segment covering 295–304 (PPVPDQEPEA) has biased composition (pro residues).

This sequence belongs to the AccD/PCCB family. In terms of assembly, acetyl-CoA carboxylase is a heterohexamer composed of biotin carboxyl carrier protein (AccB), biotin carboxylase (AccC) and two subunits each of ACCase subunit alpha (AccA) and ACCase subunit beta (AccD). Zn(2+) serves as cofactor.

The protein localises to the cytoplasm. It carries out the reaction N(6)-carboxybiotinyl-L-lysyl-[protein] + acetyl-CoA = N(6)-biotinyl-L-lysyl-[protein] + malonyl-CoA. It participates in lipid metabolism; malonyl-CoA biosynthesis; malonyl-CoA from acetyl-CoA: step 1/1. Functionally, component of the acetyl coenzyme A carboxylase (ACC) complex. Biotin carboxylase (BC) catalyzes the carboxylation of biotin on its carrier protein (BCCP) and then the CO(2) group is transferred by the transcarboxylase to acetyl-CoA to form malonyl-CoA. The sequence is that of Acetyl-coenzyme A carboxylase carboxyl transferase subunit beta from Escherichia coli O6:H1 (strain CFT073 / ATCC 700928 / UPEC).